The following is a 162-amino-acid chain: Nucleotide-binding protein Franean1_6074 (162 aa).

It belongs to the YajQ family.

Its function is as follows. Nucleotide-binding protein. The sequence is that of Nucleotide-binding protein Franean1_6074 from Parafrankia sp. (strain EAN1pec).